We begin with the raw amino-acid sequence, 219 residues long: 7-cyano-7-deazaguanine synthase (219 aa).

10-20 (FSGGQDSTTCL) lines the ATP pocket. Residues C188, C196, C199, and C202 each contribute to the Zn(2+) site.

Belongs to the QueC family. Zn(2+) is required as a cofactor.

The enzyme catalyses 7-carboxy-7-deazaguanine + NH4(+) + ATP = 7-cyano-7-deazaguanine + ADP + phosphate + H2O + H(+). It functions in the pathway purine metabolism; 7-cyano-7-deazaguanine biosynthesis. Catalyzes the ATP-dependent conversion of 7-carboxy-7-deazaguanine (CDG) to 7-cyano-7-deazaguanine (preQ(0)). The chain is 7-cyano-7-deazaguanine synthase from Neisseria gonorrhoeae (strain NCCP11945).